Reading from the N-terminus, the 704-residue chain is Elongation factor G 1 (704 aa).

The tr-type G domain occupies 8 to 290 (ERYRNIGICA…CVVEYMPAPT (283 aa)). GTP contacts are provided by residues 17-24 (AHVDAGKT), 88-92 (DTPGH), and 142-145 (NKMD).

It belongs to the TRAFAC class translation factor GTPase superfamily. Classic translation factor GTPase family. EF-G/EF-2 subfamily.

The protein resides in the cytoplasm. Its function is as follows. Catalyzes the GTP-dependent ribosomal translocation step during translation elongation. During this step, the ribosome changes from the pre-translocational (PRE) to the post-translocational (POST) state as the newly formed A-site-bound peptidyl-tRNA and P-site-bound deacylated tRNA move to the P and E sites, respectively. Catalyzes the coordinated movement of the two tRNA molecules, the mRNA and conformational changes in the ribosome. The protein is Elongation factor G 1 of Pseudoalteromonas translucida (strain TAC 125).